The sequence spans 657 residues: Translation factor GUF1, mitochondrial (657 aa).

The transit peptide at 1–39 (MRGCLQSVKWLTSALRPSQSLASSTRYPRRLLSTSAPRN) directs the protein to the mitochondrion. One can recognise a tr-type G domain in the interval 59 to 239 (ERFRNFCIVA…TVIEQIPAPV (181 aa)). GTP is bound by residues 109-116 (TVKAQTCS), 173-177 (LAFAE), and 227-230 (LLPT).

This sequence belongs to the TRAFAC class translation factor GTPase superfamily. Classic translation factor GTPase family. LepA subfamily.

The protein resides in the mitochondrion inner membrane. The enzyme catalyses GTP + H2O = GDP + phosphate + H(+). In terms of biological role, promotes mitochondrial protein synthesis. May act as a fidelity factor of the translation reaction, by catalyzing a one-codon backward translocation of tRNAs on improperly translocated ribosomes. Binds to mitochondrial ribosomes in a GTP-dependent manner. The chain is Translation factor GUF1, mitochondrial from Ajellomyces capsulatus (strain NAm1 / WU24) (Darling's disease fungus).